The following is a 1284-amino-acid chain: DNA-directed RNA polymerase subunit beta (1284 aa).

This sequence belongs to the RNA polymerase beta chain family. The RNAP catalytic core consists of 2 alpha, 1 beta, 1 beta' and 1 omega subunit. When a sigma factor is associated with the core the holoenzyme is formed, which can initiate transcription.

The catalysed reaction is RNA(n) + a ribonucleoside 5'-triphosphate = RNA(n+1) + diphosphate. DNA-dependent RNA polymerase catalyzes the transcription of DNA into RNA using the four ribonucleoside triphosphates as substrates. This is DNA-directed RNA polymerase subunit beta from Mesoplasma florum (strain ATCC 33453 / NBRC 100688 / NCTC 11704 / L1) (Acholeplasma florum).